The following is a 295-amino-acid chain: Protease HtpX (295 aa).

2 consecutive transmembrane segments (helical) span residues 4–24 (ILLFLATNLAVVLIASITLSL) and 42–62 (QLLVFCAVFGFAGSLFSLFIS). H147 is a binding site for Zn(2+). The active site involves E148. Residue H151 participates in Zn(2+) binding. The next 2 helical transmembrane spans lie at 158 to 178 (VTLALVQGVVNTFVMFFARII) and 199 to 219 (ITTIFAELVLGFLASAIVMWF). Zn(2+) is bound at residue E224.

It belongs to the peptidase M48B family. Zn(2+) serves as cofactor.

Its subcellular location is the cell inner membrane. This Pseudomonas syringae pv. tomato (strain ATCC BAA-871 / DC3000) protein is Protease HtpX.